Here is a 353-residue protein sequence, read N- to C-terminus: Trans-enoyl reductase RAP2 (353 aa).

46-49 provides a ligand contact to NADP(+); sequence CDHK. Residue 131-138 participates in substrate binding; it reads TGLSTIGM. NADP(+) is bound by residues 189–192, Tyr-207, and 254–255; these read SPRN and LE. 274 to 278 contacts substrate; the sequence is GMALL. 343–344 is an NADP(+) binding site; it reads VS.

This sequence belongs to the zinc-containing alcohol dehydrogenase family. In terms of assembly, monomer.

It participates in secondary metabolite biosynthesis. Its function is as follows. Trans-enoyl reductase; part of the gene cluster that mediates the biosynthesis of a tyrosine-derived cytochalasan acting as a fungal signal recognized by resistant rice plants and leads to avirulence in Pi33 resistant rice cultivars. The first step in the pathway is catalyzed by the hybrid PKS-NRPS ACE1, assisted by the enoyl reductase RAP1, that are responsible for fusion of the tyrosine precursor and the polyketide backbone. The polyketide synthase module (PKS) of ACE1 is responsible for the synthesis of the polyketide backbone and the downstream nonribosomal peptide synthetase (NRPS) amidates the carboxyl end of the polyketide with the tyrosine precursor. Because ACE1 lacks a designated enoylreductase (ER) domain, the required activity is provided the enoyl reductase RAP1. Reduction by the hydrolyase ORFZ, followed by dehydration and intra-molecular Diels-Alder cyclization by the Diels-Alderase ORF3 then yield the required isoindolone-fused macrocycle. A number of oxidative steps catalyzed by the tailoring enzymes identified within the cluster, including cytochrome P450 monooxygenases CYP1 to CYP4, the FAD-linked oxidoreductase OXR2 and the short-chain dehydrogenase/reductase OXR1, are further required to afford the final cytochalasans that confer avirulence and which have still to be identified. The monooxygenase CYP1 has been shown to be a site-selective C-18 hydroxylase whereas the function of CYP3 is the site-selective epoxidation of the C-6/C-7 olefin that is present in some intermediate compounds. Finally, SYN2 and RAP2 are not required for avirulence in Pi33 resistant rice cultivars. This is Trans-enoyl reductase RAP2 from Pyricularia oryzae (strain 70-15 / ATCC MYA-4617 / FGSC 8958) (Rice blast fungus).